The chain runs to 305 residues: tRNA pseudouridine synthase B (305 aa).

Catalysis depends on D39, which acts as the Nucleophile.

This sequence belongs to the pseudouridine synthase TruB family. Type 1 subfamily.

It catalyses the reaction uridine(55) in tRNA = pseudouridine(55) in tRNA. Functionally, responsible for synthesis of pseudouridine from uracil-55 in the psi GC loop of transfer RNAs. This chain is tRNA pseudouridine synthase B, found in Staphylococcus aureus (strain MSSA476).